The sequence spans 177 residues: Probable chemoreceptor glutamine deamidase CheD (177 aa).

The protein belongs to the CheD family.

The enzyme catalyses L-glutaminyl-[protein] + H2O = L-glutamyl-[protein] + NH4(+). Functionally, probably deamidates glutamine residues to glutamate on methyl-accepting chemotaxis receptors (MCPs), playing an important role in chemotaxis. This Pseudomonas syringae pv. syringae (strain B728a) protein is Probable chemoreceptor glutamine deamidase CheD.